Here is a 317-residue protein sequence, read N- to C-terminus: Ribosomal RNA small subunit methyltransferase H (317 aa).

S-adenosyl-L-methionine contacts are provided by residues 30-32 (GGH), Asp50, Tyr74, Asp95, and Gln102.

Belongs to the methyltransferase superfamily. RsmH family.

It localises to the cytoplasm. The enzyme catalyses cytidine(1402) in 16S rRNA + S-adenosyl-L-methionine = N(4)-methylcytidine(1402) in 16S rRNA + S-adenosyl-L-homocysteine + H(+). Functionally, specifically methylates the N4 position of cytidine in position 1402 (C1402) of 16S rRNA. This chain is Ribosomal RNA small subunit methyltransferase H, found in Nitrosomonas europaea (strain ATCC 19718 / CIP 103999 / KCTC 2705 / NBRC 14298).